The sequence spans 261 residues: MNFVQENNQVLYIWGGTISADIEQEVNQLKSIPGVKVNVENAERVLLGGYGQSQFDIILANVSTGNSELVSHLLKLTKPKGKAVFKDDSAAGGAETVRANLLLSGFINIASAEGNVYIAEKPNYEIGSAAKLSLGGGANKAKVAAVWKLDVDDDGEAEERIDEDELLDEEDKVKPSAESLRVCGTTGKRKACKDCSCGLAEELDAESKGAAVAAAQSAKSSCGSCYLGDAFRCATCPYLGMPAFKPGEKIQLSDTQMQADV.

Residues 4–134 are N-terminal SAM-like domain; sequence VQENNQVLYI…EIGSAAKLSL (131 aa). The segment at 134–173 is linker; that stretch reads LGGGANKAKVAAVWKLDVDDDGEAEERIDEDELLDEEDKV. [2Fe-2S] cluster is bound by residues C183, C192, C195, and C197. A fe-S binding site A region spans residues 183–197; the sequence is CGTTGKRKACKDCSC. C222, C225, C233, and C236 together coordinate [4Fe-4S] cluster. 2 short sequence motifs (cx2C motif) span residues 222-225 and 233-236; these read CGSC and CATC. The interval 222-236 is fe-S binding site B; the sequence is CGSCYLGDAFRCATC.

It belongs to the anamorsin family. Monomer. [2Fe-2S] cluster is required as a cofactor. [4Fe-4S] cluster serves as cofactor.

Its subcellular location is the cytoplasm. The protein resides in the mitochondrion intermembrane space. Functionally, component of the cytosolic iron-sulfur (Fe-S) protein assembly (CIA) machinery. Required for the maturation of extramitochondrial Fe-S proteins. Part of an electron transfer chain functioning in an early step of cytosolic Fe-S biogenesis, facilitating the de novo assembly of a [4Fe-4S] cluster on the cytosolic Fe-S scaffold complex. Electrons are transferred from NADPH via a FAD- and FMN-containing diflavin oxidoreductase. Together with the diflavin oxidoreductase, also required for the assembly of the diferric tyrosyl radical cofactor of ribonucleotide reductase (RNR), probably by providing electrons for reduction during radical cofactor maturation in the catalytic small subunit. This Culex quinquefasciatus (Southern house mosquito) protein is Anamorsin homolog.